Reading from the N-terminus, the 1713-residue chain is Serine/threonine-protein kinase MRCK beta (1713 aa).

The Protein kinase domain maps to 76–342; the sequence is FEIIKVIGRG…IEDFKKHAFF (267 aa). ATP-binding positions include 82 to 90 and Lys105; that span reads IGRGAFGEV. Asp200 serves as the catalytic Proton acceptor. Residues Ser221 and Ser233 each carry the phosphoserine; by autocatalysis modification. Thr239 is subject to Phosphothreonine; by autocatalysis. Residues 343-413 form the AGC-kinase C-terminal domain; that stretch reads EGLNWENIRN…TTESCFSDRG (71 aa). Residue Thr423 is modified to Phosphothreonine. A coiled-coil region spans residues 434 to 649; that stretch reads LENSLQIEAY…ASKERKLREH (216 aa). The disordered stretch occupies residues 461–485; that stretch reads LQESTQTVQSLHGSTRALGNSNRDK. Positions 463-481 are enriched in polar residues; sequence ESTQTVQSLHGSTRALGNS. An Omega-N-methylarginine modification is found at Arg671. Coiled-coil stretches lie at residues 681–815 and 882–939; these read QEIS…AHWE and ALEA…FRAD. Ser927 is modified (phosphoserine). Phosphotyrosine is present on Tyr954. Composition is skewed to polar residues over residues 971–994 and 1001–1014; these read ASDQ…TSTE and RSQQ…LPNT. The segment at 971-1014 is disordered; sequence ASDQETQASKLDLSPSVSVATSTEQQEDAARSQQRPSTVPLPNT. The Phorbol-ester/DAG-type zinc finger occupies 1026 to 1076; that stretch reads AHQFSIKSFPSPTQCSHCTSLMVGLIRQGYACEVCAFSCHVSCKDSAPQVC. Positions 1096–1215 constitute a PH domain; the sequence is GTAYKGYVKV…WVGILEGLQA (120 aa). In terms of domain architecture, CNH spans 1241 to 1515; sequence IKTVLAAAIV…RPLNSDGSLN (275 aa). In terms of domain architecture, CRIB spans 1585 to 1598; the sequence is ISNPTNFNHVAHMG. Residues 1615–1713 are disordered; sequence PTAQEEKQGP…EGLDQPACDA (99 aa). Residues 1666–1677 are compositionally biased toward basic and acidic residues; that stretch reads DFDKEPDSDSTK. Phosphoserine occurs at positions 1682, 1684, 1688, 1692, and 1695.

This sequence belongs to the protein kinase superfamily. AGC Ser/Thr protein kinase family. DMPK subfamily. Homodimer and homotetramer via the coiled coil regions. Interacts tightly with GTP-bound but not GDP-bound CDC42. Interacts with TJP1; this interaction requires the presence of catalytically active CDC42. Forms a tripartite complex with MYO18A and LURAP1 with the latter acting as an adapter connecting CDC42BPB and MYO18A. LURAP1 binding results in activation of CDC42BPB by abolition of its negative autoregulation. Interacts with STRIP1, STRN3 and SIKE1. Interacts with CPNE4 (via VWFA domain). Interacts with LURAP1. Interacts (via AGC-kinase C-terminal domain) with FAM89B/LRAP25 (via LRR repeat). Forms a tripartite complex with FAM89B/LRAP25 and LIMK1. The cofactor is Mg(2+). Post-translationally, proteolytically cleaved by caspases upon apoptosis induction. In terms of tissue distribution, expressed in all tissues examined with highest levels in lung and kidney.

The protein localises to the cytoplasm. Its subcellular location is the cell membrane. The protein resides in the cell junction. It is found in the cell projection. It localises to the lamellipodium. The enzyme catalyses L-seryl-[protein] + ATP = O-phospho-L-seryl-[protein] + ADP + H(+). It catalyses the reaction L-threonyl-[protein] + ATP = O-phospho-L-threonyl-[protein] + ADP + H(+). Maintained in an inactive, closed conformation by an interaction between the kinase domain and the negative autoregulatory C-terminal coiled-coil region. Agonist binding to the phorbol ester binding site disrupts this, releasing the kinase domain to allow N-terminus-mediated dimerization and kinase activation by transautophosphorylation. Inhibited by chelerythrine chloride. Functionally, serine/threonine-protein kinase which is an important downstream effector of CDC42 and plays a role in the regulation of cytoskeleton reorganization and cell migration. Regulates actin cytoskeletal reorganization via phosphorylation of PPP1R12C and MYL9/MLC2. In concert with MYO18A and LURAP1, is involved in modulating lamellar actomyosin retrograde flow that is crucial to cell protrusion and migration. Phosphorylates PPP1R12A. In concert with FAM89B/LRAP25 mediates the targeting of LIMK1 to the lamellipodium resulting in its activation and subsequent phosphorylation of CFL1 which is important for lamellipodial F-actin regulation. This Rattus norvegicus (Rat) protein is Serine/threonine-protein kinase MRCK beta.